A 288-amino-acid chain; its full sequence is 2-hydroxy-6-oxononadienedioate/2-hydroxy-6-oxononatrienedioate hydrolase (288 aa).

His-267 acts as the Proton acceptor in catalysis.

The protein belongs to the AB hydrolase superfamily. MhpC family. As to quaternary structure, homodimer.

It carries out the reaction (2Z,4E)-2-hydroxy-6-oxonona-2,4-dienedioate + H2O = (2Z)-2-hydroxypenta-2,4-dienoate + succinate + H(+). It catalyses the reaction (2Z,4E,7E)-2-hydroxy-6-oxonona-2,4,7-trienedioate + H2O = (2Z)-2-hydroxypenta-2,4-dienoate + fumarate + H(+). The protein operates within aromatic compound metabolism; 3-phenylpropanoate degradation. In terms of biological role, catalyzes the cleavage of the C5-C6 bond of 2-hydroxy-6-oxononadienedioate and 2-hydroxy-6-oxononatrienedioate, a dienol ring fission product of the bacterial meta-cleavage pathway for degradation of phenylpropionic acid. This Klebsiella pneumoniae subsp. pneumoniae (strain ATCC 700721 / MGH 78578) protein is 2-hydroxy-6-oxononadienedioate/2-hydroxy-6-oxononatrienedioate hydrolase.